We begin with the raw amino-acid sequence, 239 residues long: mRNA turnover protein 4 homolog (239 aa).

Residues Q216 to S239 are disordered. Positions D221–S239 are enriched in acidic residues. S225, S229, and S233 each carry phosphoserine.

It belongs to the universal ribosomal protein uL10 family. Associates with the pre-60S ribosomal particle. Interacts with MINAS-60 (product of an alternative open reading frame of RBM10).

The protein resides in the nucleus. It is found in the nucleolus. It localises to the cytoplasm. Component of the ribosome assembly machinery. Nuclear paralog of the ribosomal protein P0, it binds pre-60S subunits at an early stage of assembly in the nucleolus, and is replaced by P0 in cytoplasmic pre-60S subunits and mature 80S ribosomes. The sequence is that of mRNA turnover protein 4 homolog (MRTO4) from Bos taurus (Bovine).